Consider the following 214-residue polypeptide: Ribosomal RNA small subunit methyltransferase G (214 aa).

Residues Gly-77, Leu-82, 128-129 (VE), and Arg-143 contribute to the S-adenosyl-L-methionine site.

It belongs to the methyltransferase superfamily. RNA methyltransferase RsmG family.

The protein localises to the cytoplasm. The catalysed reaction is guanosine(527) in 16S rRNA + S-adenosyl-L-methionine = N(7)-methylguanosine(527) in 16S rRNA + S-adenosyl-L-homocysteine. In terms of biological role, specifically methylates the N7 position of guanine in position 527 of 16S rRNA. In Nitrosococcus oceani (strain ATCC 19707 / BCRC 17464 / JCM 30415 / NCIMB 11848 / C-107), this protein is Ribosomal RNA small subunit methyltransferase G.